Consider the following 214-residue polypeptide: NAD(P)H-quinone oxidoreductase subunit 6, chloroplastic (214 aa).

The next 5 membrane-spanning stretches (helical) occupy residues 10–30 (FSLF…VLLP), 32–52 (ILYS…IYLL), 61–81 (AQVL…IMLV), 102–122 (IIGL…VTTP), and 163–183 (LLPF…AIVI).

This sequence belongs to the complex I subunit 6 family. In terms of assembly, NDH is composed of at least 16 different subunits, 5 of which are encoded in the nucleus.

It localises to the plastid. Its subcellular location is the chloroplast thylakoid membrane. The catalysed reaction is a plastoquinone + NADH + (n+1) H(+)(in) = a plastoquinol + NAD(+) + n H(+)(out). It carries out the reaction a plastoquinone + NADPH + (n+1) H(+)(in) = a plastoquinol + NADP(+) + n H(+)(out). Functionally, NDH shuttles electrons from NAD(P)H:plastoquinone, via FMN and iron-sulfur (Fe-S) centers, to quinones in the photosynthetic chain and possibly in a chloroplast respiratory chain. The immediate electron acceptor for the enzyme in this species is believed to be plastoquinone. Couples the redox reaction to proton translocation, and thus conserves the redox energy in a proton gradient. This chain is NAD(P)H-quinone oxidoreductase subunit 6, chloroplastic (ndhG), found in Chlorokybus atmophyticus (Soil alga).